A 360-amino-acid polypeptide reads, in one-letter code: Putative F-box protein At3g16210 (360 aa).

The F-box domain maps to 1–48 (MSKFLPEELAIEILVRLSMKDLARFRCVCKTWRDLINDPGFTETYRDM).

The chain is Putative F-box protein At3g16210 from Arabidopsis thaliana (Mouse-ear cress).